The following is a 643-amino-acid chain: Versicolorin B synthase (643 aa).

Positions 1-41 (MGRNWFQVTAMAVVPVVGIMAAVNPTILSSAASSLPSLGAM) are excised as a propeptide. FAD-binding positions include 84–85 (TA) and 105–106 (EA). Asn-116 carries an N-linked (GlcNAc...) asparagine glycan. Position 171–174 (171–174 (GAML)) interacts with FAD. N-linked (GlcNAc...) asparagine glycosylation is found at Asn-221 and Asn-507. FAD-binding positions include Ala-613 and 624-625 (PM).

Belongs to the GMC oxidoreductase family. Homodimer. FAD serves as cofactor. In terms of processing, N-glycosylated.

It localises to the cytoplasm. The protein localises to the cytosol. It catalyses the reaction (2S-3S)-versiconal hemiacetal = versicolorin B + H2O. The catalysed reaction is (S)-5'-oxoaverantin + H(+) = (1'S,5'S)-averufin + H2O. Its pathway is mycotoxin biosynthesis; aflatoxin biosynthesis. Functionally, dual cyclase; part of the gene cluster that mediates the biosynthesis of aflatoxins, a group of polyketide-derived furanocoumarins, and part of the most toxic and carcinogenic compounds among the known mycotoxins. The four major aflatoxins produced by A.parasiticus are aflatoxin B1 (AFB1), aflatoxin B2 (AFB2), aflatoxin G1 (AFG1) and aflatoxin G2 (AFG2). Aflk plays a dual role within the aflatoxin pathway, as a 5'-oxoaverantin cyclase that mediates conversion of 5'-oxoaverantin (OAVN) to averufin (AVF), as well as a versicolorin B synthase that converts versiconal (VAL) to versicolorin B (VERB) by closing the bisfuran ring of aflatoxin which is required for DNA-binding, thus giving to aflatoxin its activity as a mutagen. The biosynthesis of aflatoxins begins with the norsolorinic acid synthase aflC that combines a hexanoyl starter unit produced by the fatty acid synthase aflA/aflB and 7 malonyl-CoA extender units to synthesize the precursor NOR. The second step is the conversion of NOR to averantin and requires the norsolorinic acid ketoreductase aflD, which catalyzes the dehydration of norsolorinic acid to form (1'S)-averantin. The norsolorinic acid reductases aflE and aflF may also play a role in the conversion of NOR to AVN. The cytochrome P450 monooxygenase aflG then catalyzes the hydroxylation of AVN to 5'hydroxyaverantin (HAVN). The next step is performed by the 5'-hydroxyaverantin dehydrogenase aflH that transforms HAVN to 5'-oxoaverantin (OAVN) which is further converted to averufin (AVF) by aflK that plays a dual role in the pathway, as a 5'-oxoaverantin cyclase that mediates conversion of 5'-oxoaverantin, as well as a versicolorin B synthase in a later step in the pathway. The averufin oxidase aflI catalyzes the conversion of AVF to versiconal hemiacetal acetate (VHA). VHA is then the substrate for the versiconal hemiacetal acetate esterase aflJ to yield versiconal (VAL). Versicolorin B synthase aflK then converts VAL to versicolorin B (VERB) by closing the bisfuran ring of aflatoxin which is required for DNA-binding, thus giving to aflatoxin its activity as a mutagen. Then, the activity of the versicolorin B desaturase aflL leads to versicolorin A (VERA). A branch point starts from VERB since it can also be converted to dihydrodemethylsterigmatocystin (DMDHST), probably also by aflL, VERA being a precursor for aflatoxins B1 and G1, and DMDHST for aflatoxins B2 and G2. Next, the versicolorin reductase aflM and the cytochrome P450 monooxygenase aflN are involved in conversion of VERA to demethylsterigmatocystin (DMST). AflX and aflY seem also involved in this step, through probable aflX-mediated epoxide ring-opening step following versicolorin A oxidation and aflY-mediated Baeyer-Villiger oxidation required for the formation of the xanthone ring. The methyltransferase aflO then leads to the modification of DMST to sterigmatocystin (ST), and of DMDHST to dihydrosterigmatocystin (DHST). Both ST and DHST are then substrates of the O-methyltransferase aflP to yield O-methylsterigmatocystin (OMST) and dihydro-O-methylsterigmatocystin (DHOMST), respectively. Finally OMST is converted to aflatoxins B1 and G1, and DHOMST to aflatoxins B2 and G2, via the action of several enzymes including O-methylsterigmatocystin oxidoreductase aflQ, the cytochrome P450 monooxygenase aflU, but also the NADH-dependent flavin oxidoreductase nadA which is specifically required for the synthesis of AFG1. In Aspergillus parasiticus (strain ATCC 56775 / NRRL 5862 / SRRC 143 / SU-1), this protein is Versicolorin B synthase.